The primary structure comprises 239 residues: Tetraspanin-9 (239 aa).

Over 1 to 13 (MARGCLCCLKYTM) the chain is Cytoplasmic. A helical transmembrane segment spans residues 14-34 (FLFNLIFWLCGCGLLGVGIWL). Residues 35-55 (SVSQGNFATFSPSFPSLSAAN) lie on the Extracellular side of the membrane. Residues 56–76 (LVIAIGTIVMVTGFLGCLGAI) traverse the membrane as a helical segment. The Cytoplasmic portion of the chain corresponds to 77–85 (KENKCLLLS). The chain crosses the membrane as a helical span at residues 86–106 (FFIVLLIILLAELILIILFFV). Topologically, residues 107–203 (YMDKVNENAK…VKLWFDDNKH (97 aa)) are extracellular. N-linked (GlcNAc...) asparagine glycosylation occurs at asparagine 180. Residues 204–224 (VLGTVGMCILIMQILGMAFSM) form a helical membrane-spanning segment. Topologically, residues 225 to 239 (TLFQHIHRTGKKYDA) are cytoplasmic.

The protein belongs to the tetraspanin (TM4SF) family. In terms of assembly, found in a complex with GP6. Post-translationally, glycosylated. In terms of tissue distribution, strongly expressed in megakaryocytes, platelets and lung. Weakly expressed in bone marrow, brain and kidney (at protein level).

The protein resides in the membrane. The polypeptide is Tetraspanin-9 (Tspan9) (Mus musculus (Mouse)).